The primary structure comprises 816 residues: Acyl-homoserine lactone acylase QuiP (816 aa).

The signal sequence occupies residues 1–33 (MASPALSHFLPRFGVAAAVAGVLSLTGCQTWNA). Residue Ser-262 is the Nucleophile of the active site.

Belongs to the peptidase S45 family. Heterodimer of an alpha subunit and a beta subunit processed from the same precursor.

It is found in the periplasm. The enzyme catalyses an N-acyl-L-homoserine lactone + H2O = L-homoserine lactone + a carboxylate. Its function is as follows. Catalyzes the deacylation of acyl-homoserine lactone (AHL or acyl-HSL), releasing homoserine lactone (HSL) and the corresponding fatty acid. Possesses a specificity for the degradation of long-chain acyl-HSLs (side chains of seven or more carbons in length). This chain is Acyl-homoserine lactone acylase QuiP (quiP), found in Pseudomonas fluorescens (strain Pf0-1).